The primary structure comprises 106 residues: Small ribosomal subunit protein uS10 (106 aa).

This sequence belongs to the universal ribosomal protein uS10 family. Part of the 30S ribosomal subunit.

Involved in the binding of tRNA to the ribosomes. The protein is Small ribosomal subunit protein uS10 of Pyrobaculum islandicum (strain DSM 4184 / JCM 9189 / GEO3).